The primary structure comprises 244 residues: Phosphoadenosine 5'-phosphosulfate reductase (244 aa).

Residue Cys-239 is the Nucleophile; cysteine thiosulfonate intermediate of the active site.

It belongs to the PAPS reductase family. CysH subfamily.

It is found in the cytoplasm. It carries out the reaction [thioredoxin]-disulfide + sulfite + adenosine 3',5'-bisphosphate + 2 H(+) = [thioredoxin]-dithiol + 3'-phosphoadenylyl sulfate. It functions in the pathway sulfur metabolism; hydrogen sulfide biosynthesis; sulfite from sulfate: step 3/3. Catalyzes the formation of sulfite from phosphoadenosine 5'-phosphosulfate (PAPS) using thioredoxin as an electron donor. This chain is Phosphoadenosine 5'-phosphosulfate reductase, found in Escherichia coli O8 (strain IAI1).